Reading from the N-terminus, the 1162-residue chain is Integrin alpha-L (1162 aa).

The N-terminal stretch at methionine 1–serine 23 is a signal peptide. At tyrosine 24–histidine 1088 the chain is on the extracellular side. 2 FG-GAP repeats span residues threonine 28–proline 79 and valine 80–leucine 138. Residues cysteine 70 and cysteine 77 are joined by a disulfide bond. Asparagine 86 carries N-linked (GlcNAc...) asparagine glycosylation. Intrachain disulfides connect cysteine 108/cysteine 126 and cysteine 147/cysteine 199. The region spanning aspartate 153 to leucine 325 is the VWFA domain. N-linked (GlcNAc...) asparagine glycosylation is found at asparagine 185 and asparagine 270. 5 FG-GAP repeats span residues asparagine 336–phenylalanine 387, glutamine 390–tryptophan 443, asparagine 444–methionine 504, valine 505–proline 561, and glutamine 565–glutamate 625. Asparagine 444 carries N-linked (GlcNAc...) asparagine glycosylation. Ca(2+) is bound by residues aspartate 466, aspartate 468, aspartate 470, glutamate 474, aspartate 528, asparagine 530, aspartate 532, aspartate 536, aspartate 588, aspartate 592, and aspartate 596. An intrachain disulfide couples cysteine 651 to cysteine 705. 4 N-linked (GlcNAc...) asparagine glycosylation sites follow: asparagine 668, asparagine 696, asparagine 724, and asparagine 728. A disulfide bond links cysteine 768 and cysteine 774. N-linked (GlcNAc...) asparagine glycosylation occurs at asparagine 777. Cysteine 841 and cysteine 857 are disulfide-bonded. 5 N-linked (GlcNAc...) asparagine glycosylation sites follow: asparagine 858, asparagine 881, asparagine 891, asparagine 900, and asparagine 928. 2 disulfides stabilise this stretch: cysteine 994/cysteine 1010 and cysteine 1018/cysteine 1049. Asparagine 1057 carries N-linked (GlcNAc...) asparagine glycosylation. A helical transmembrane segment spans residues valine 1089–tyrosine 1109. The Cytoplasmic segment spans residues lysine 1110–aspartate 1162. Positions glycine 1112–arginine 1116 match the GFFKR motif motif. Residues alanine 1124–aspartate 1162 form a disordered region. The span at glutamate 1145–aspartate 1162 shows a compositional bias: basic and acidic residues.

This sequence belongs to the integrin alpha chain family. Heterodimer of an alpha and a beta subunit. The ITGAL alpha subunit associates with the ITGB2 beta subunit. Interacts with THBD. Interacts with CD226. In terms of processing, in resting T-cells, up to 40% of surface ITGAL is constitutively phosphorylated. Phosphorylation causes conformational changes needed for ligand binding and is necessary for the activation by some physiological agents. Leukocytes.

The protein localises to the cell membrane. In terms of biological role, integrin ITGAL/ITGB2 is a receptor for ICAM1, ICAM2, ICAM3 and ICAM4. Integrin ITGAL/ITGB2 is a receptor for F11R. Integrin ITGAL/ITGB2 is a receptor for the secreted form of ubiquitin-like protein ISG15; the interaction is mediated by ITGAL. Involved in a variety of immune phenomena including leukocyte-endothelial cell interaction, cytotoxic T-cell mediated killing, and antibody dependent killing by granulocytes and monocytes. Contributes to natural killer cell cytotoxicity. Involved in leukocyte adhesion and transmigration of leukocytes including T-cells and neutrophils. Acts as a platform at the immunological synapse to translate TCR engagement and density of the ITGAL ligand ICAM1 into graded adhesion. Required for generation of common lymphoid progenitor cells in bone marrow, indicating the role in lymphopoiesis. Integrin ITGAL/ITGB2 in association with ICAM3, contributes to apoptotic neutrophil phagocytosis by macrophages. This chain is Integrin alpha-L, found in Mus musculus (Mouse).